Consider the following 772-residue polypeptide: Endoplasmic reticulum membrane sensor NFE2L1 (772 aa).

A helical; Signal-anchor for type II membrane protein transmembrane segment spans residues Tyr7–Val24. Residues Ile191–Lys199 are cholesterol recognition/amino acid consensus (CRAC) region. Residues Gln198–Gly216 are compositionally biased toward basic and acidic residues. The tract at residues Gln198 to Gln223 is disordered. 8 N-linked (GlcNAc...) asparagine glycosylation sites follow: Asn332, Asn340, Asn362, Asn402, Asn407, Asn414, Asn425, and Asn429. Residues Glu472–Glu531 form a disordered region. A compositionally biased stretch (low complexity) spans Asp478–Ser519. A glycan (N-linked (GlcNAc...) asparagine) is linked at Asn574. The disordered stretch occupies residues Pro581 to Arg613. Residues Ser598 to Arg613 show a composition bias toward basic and acidic residues. The bZIP domain occupies Leu654 to Leu717. Residues Arg656 to Lys675 form a basic motif region. The segment at Leu682–Leu696 is leucine-zipper. Residues Arg761–Lys768 carry the Nuclear localization signal motif.

Belongs to the bZIP family. CNC subfamily. In terms of assembly, interacts (via the bZIP domain) with small MAF protein (MAFF, MAFG or MAFK); required for binding to antioxidant response elements (AREs) on DNA. In terms of processing, cleaved at Leu-104 following retrotranslocation, releasing the protein from the endoplasmic reticulum membrane and forming the transcription factor NRF1 that translocates into the nucleus.

The protein localises to the endoplasmic reticulum membrane. Its subcellular location is the nucleus. In terms of biological role, endoplasmic reticulum membrane sensor that translocates into the nucleus in response to various stresses to act as a transcription factor. Constitutes a precursor of the transcription factor NRF1. Able to detect various cellular stresses, such as cholesterol excess, oxidative stress or proteasome inhibition. In response to stress, it is released from the endoplasmic reticulum membrane following cleavage and translocates into the nucleus to form the transcription factor NRF1. Acts as a key sensor of cholesterol excess: in excess cholesterol conditions, the endoplasmic reticulum membrane form of the protein directly binds cholesterol via its CRAC motif, preventing cleavage and release of the transcription factor NRF1, thereby allowing expression of genes promoting cholesterol removal. Involved in proteasome homeostasis: in response to proteasome inhibition, it is released from the endoplasmic reticulum membrane, translocates to the nucleus and activates expression of genes encoding proteasome subunits. Functionally, CNC-type bZIP family transcription factor that translocates to the nucleus and regulates expression of target genes in response to various stresses. Heterodimerizes with small-Maf proteins (MAFF, MAFG or MAFK) and binds DNA motifs including the antioxidant response elements (AREs), which regulate expression of genes involved in oxidative stress response. Activates or represses expression of target genes, depending on the context. Plays a key role in cholesterol homeostasis by acting as a sensor of cholesterol excess: in low cholesterol conditions, translocates into the nucleus and represses expression of genes involved in defense against cholesterol excess. In excess cholesterol conditions, the endoplasmic reticulum membrane form of the protein directly binds cholesterol via its CRAC motif, preventing cleavage and release of the transcription factor NRF1, thereby allowing expression of genes promoting cholesterol removal. Critical for redox balance in response to oxidative stress: acts by binding the AREs motifs on promoters and mediating activation of oxidative stress response genes. Involved in proteasome homeostasis: in response to proteasome inhibition, mediates the 'bounce-back' of proteasome subunits by translocating into the nucleus and activating expression of genes encoding proteasome subunits. The sequence is that of Endoplasmic reticulum membrane sensor NFE2L1 from Gallus gallus (Chicken).